The chain runs to 392 residues: Aryl-hydrocarbon-interacting protein-like 1 (392 aa).

Residues 53–145 (RQVDQPMHII…DLDELQKEPQ (93 aa)) form the PPIase FKBP-type domain. TPR repeat units follow at residues 178–211 (VPVLHGEGNRLFKLGRYEEASSKYQEAIICLRNL), 230–263 (NTLTLNYCQCLLKKEEYYEVLEHTSDILRHHPGI), and 264–297 (VKAYYVRARAHAEVWNEAEAKADLQKVLELEPSM). The tract at residues 329–392 (QGATQPPAEP…PLSPGHSLQH (64 aa)) is disordered. Pro residues-rich tracts occupy residues 335-346 (PAEPPAQPPTAP) and 355-366 (PADPPAEPPTAP).

As to quaternary structure, interacts with NUB1.

The protein resides in the cytoplasm. It localises to the nucleus. In terms of biological role, may be important in protein trafficking and/or protein folding and stabilization. The chain is Aryl-hydrocarbon-interacting protein-like 1 (AIPL1) from Macaca mulatta (Rhesus macaque).